We begin with the raw amino-acid sequence, 384 residues long: DNA polymerase IV (384 aa).

The UmuC domain occupies 5-182; that stretch reads IIHVDMDAFF…LPVTKVHGIG (178 aa). Mg(2+) contacts are provided by Asp-9, Met-10, and Asp-103. Glu-104 is an active-site residue.

It belongs to the DNA polymerase type-Y family. As to quaternary structure, monomer. Mg(2+) serves as cofactor.

The protein resides in the cytoplasm. It catalyses the reaction DNA(n) + a 2'-deoxyribonucleoside 5'-triphosphate = DNA(n+1) + diphosphate. Poorly processive, error-prone DNA polymerase involved in translesion repair and untargeted mutagenesis. Copies undamaged DNA at stalled replication forks, which arise in vivo from mismatched or misaligned primer ends. These misaligned primers can be extended by PolIV. Exhibits no 3'-5' exonuclease (proofreading) activity. Involved in translesional synthesis. Primer extension fidelity in vitro is temperature-dependent. Inserts a correct base opposite templating bases at 70 degrees Celsius, but at 37 degrees Celsius in addition to correct base pairing, base transitions, transversions and frameshifts can occur. Preferably forms erroneous base pairs C:T. Bypasses 8-oxo-dG oxidative damage by incorporating dATP or dCTP opposite of the damaged DNA template site at both temperatures in vitro. The polypeptide is DNA polymerase IV (Caldanaerobacter subterraneus subsp. tengcongensis (strain DSM 15242 / JCM 11007 / NBRC 100824 / MB4) (Thermoanaerobacter tengcongensis)).